We begin with the raw amino-acid sequence, 112 residues long: Elongin-C (112 aa).

Belongs to the SKP1 family. In terms of assembly, heterotrimer of an A (ELOA, ELOA2 or ELOA3P), ELOB and ELOC subunit. The elongin BC complex interacts with EPOP; leading to recruit the elongin BC complex to Polycomb group (PcG) target genes, thereby restricting excessive activity of the PRC2/EED-EZH2 complex. Component of multiple cullin-RING E3 ubiquitin-protein ligase complexes composed of Elongin BC (ELOB and ELOC), a cullin (CUL2 or CUL5), a catalytic subunit (RBX1 or RNF7/RBX2), as well as a substrate adapter protein that can be either ASB2, ASB9, ASB11, KLHDC2, KLHDC3, KLHDC10, APPBP2, FEM1A, FEM1B, FEM1C, LRR1, PCMTD1, SOCS1, SOCS2, SOCS5, SPSB1, SPSB3, ELOA, VHL, WSB1, ZYG11B or RAB40C. Interacts with TMF1. As part of the Elongin BC E3 ubiquitin ligase complex; interacts with NRBP1. May form oligomers as a KLHDC2/KLHDC3-ELOB-ELOC complex; this interaction is autoinhibitory for the E3 ligase complex as the substrate-binding site of KLHDC2/KLHDC3 is blocked in the oligomer. Post-translationally, ubiquitinated by the DCX(AMBRA1) complex, leading to its degradation by the proteasome.

It is found in the nucleus. It participates in protein modification; protein ubiquitination. Its function is as follows. SIII, also known as elongin, is a general transcription elongation factor that increases the RNA polymerase II transcription elongation past template-encoded arresting sites. Subunit A is transcriptionally active and its transcription activity is strongly enhanced by binding to the dimeric complex of the SIII regulatory subunits B and C (elongin BC complex). In embryonic stem cells, the elongin BC complex is recruited by EPOP to Polycomb group (PcG) target genes in order generate genomic region that display both active and repressive chromatin properties, an important feature of pluripotent stem cells. In terms of biological role, core component of multiple cullin-RING-based ECS (ElonginB/C-CUL2/5-SOCS-box protein) E3 ubiquitin-protein ligase complexes, which mediate the ubiquitination of target proteins. By binding to BC-box motifs it seems to link target recruitment subunits, like VHL and members of the SOCS box family, to Cullin/RBX1 modules that activate E2 ubiquitination enzymes. Component the von Hippel-Lindau ubiquitination complex CBC(VHL). A number of ECS complexes (containing either KLHDC2, KLHDC3, KLHDC10, APPBP2, FEM1A, FEM1B or FEM1C as substrate-recognition component) are part of the DesCEND (destruction via C-end degrons) pathway, which recognizes a C-degron located at the extreme C terminus of target proteins, leading to their ubiquitination and degradation. The ECS(ASB9) complex mediates ubiquitination and degradation of CKB. As part of a multisubunit ubiquitin ligase complex, polyubiquitinates monoubiquitinated POLR2A. ECS(LRR1) ubiquitinates MCM7 and promotes CMG replisome disassembly by VCP and chromatin extraction during S-phase. As part of the ECS(RAB40C) complex, mediates ANKRD28 ubiquitination and degradation, thereby inhibiting protein phosphatase 6 (PP6) complex activity and focal adhesion assembly during cell migration. The sequence is that of Elongin-C (ELOC) from Bos taurus (Bovine).